We begin with the raw amino-acid sequence, 557 residues long: Arginine--tRNA ligase (557 aa).

Residues 132-142 (ANPTGLLHMGN) carry the 'HIGH' region motif.

This sequence belongs to the class-I aminoacyl-tRNA synthetase family. As to quaternary structure, monomer.

The protein resides in the cytoplasm. It carries out the reaction tRNA(Arg) + L-arginine + ATP = L-arginyl-tRNA(Arg) + AMP + diphosphate. In Carboxydothermus hydrogenoformans (strain ATCC BAA-161 / DSM 6008 / Z-2901), this protein is Arginine--tRNA ligase.